Here is a 222-residue protein sequence, read N- to C-terminus: Kinetochore protein Spc25 (222 aa).

Residues 51–100 are a coiled coil; that stretch reads RHQRKVGKLQKVIMERREELDKRVSFIEELDRELEATKLRSLAMKDRIKQ.

It belongs to the SPC25 family. In terms of assembly, component of the Ndc80 complex, which is composed of Ndc80, Nuf2 and Spc25.

Its subcellular location is the nucleus. The protein resides in the chromosome. It localises to the centromere. It is found in the kinetochore. Acts as a component of the essential kinetochore-associated Ndc80 complex, which is required for chromosome segregation and spindle checkpoint activity during meiosis and mitosis. Required for kinetochore integrity and the organization of stable microtubule binding sites in the outer plate of the kinetochore. Participates in SAC signaling that responds specifically to disruptions in spindle microtubule dynamics. The NDC80 complex synergistically enhances the affinity of the SKA1 complex for microtubules and may allow the NDC80 complex to track depolymerizing microtubules. This is Kinetochore protein Spc25 from Drosophila sechellia (Fruit fly).